The following is a 545-amino-acid chain: MLPGAWLLWTSLLLLARPAQPCPMGCDCFVQEVFCSDEELATVPLDIPPYTKNIIFVETSFTTLETRAFGSNPNLTKVVFLNTQLCQFRPDAFGGLPRLEDLEVTGSSFLNLSTNIFSNLTSLGKLTLNFNMLEALPEGLFQHLAALESLHLQGNQLQALPRRLFQPLTHLKTLNLAQNLLAQLPEELFHPLTSLQTLKLSNNALSGLPQGVFGKLGSLQELFLDSNNISELPPQVFSQLFCLERLWLQRNAITHLPLSIFASLGNLTFLSLQWNMLRVLPAGLFAHTPCLVGLSLTHNQLETVAEGTFAHLSNLRSLMLSYNAITHLPAGIFRDLEELVKLYLGSNNLTALHPALFQNLSKLELLSLSKNQLTTLPEGIFDTNYNLFNLALHGNPWQCDCHLAYLFNWLQQYTDRLLNIQTYCAGPAYLKGQVVPALNEKQLVCPVTRDHLGFQVTWPDESKAGGSWDLAVQERAARSQCTYSNPEGTVVLACDQAQCRWLNVQLSPQQGSLGLQYNASQEWDLRSSCGSLRLTVSIEARAAGP.

The first 21 residues, methionine 1–proline 21, serve as a signal peptide directing secretion. An LRRNT domain is found at cysteine 22 to proline 49. Asparagine 74, asparagine 111, and asparagine 119 each carry an N-linked (GlcNAc...) asparagine glycan. 12 LRR repeats span residues arginine 98 to asparagine 119, serine 122 to histidine 143, alanine 146 to proline 167, histidine 170 to proline 191, serine 194 to lysine 215, serine 218 to glutamine 239, cysteine 242 to serine 263, asparagine 266 to histidine 287, cysteine 290 to histidine 311, asparagine 314 to aspartate 335, glutamate 338 to asparagine 359, and lysine 362 to threonine 383. A glycan (N-linked (GlcNAc...) asparagine) is linked at asparagine 228. A glycan (N-linked (GlcNAc...) asparagine) is linked at asparagine 266. Residues asparagine 348 and asparagine 359 are each glycosylated (N-linked (GlcNAc...) asparagine). Residues asparagine 395–valine 447 form the LRRCT domain. Asparagine 518 carries N-linked (GlcNAc...) asparagine glycosylation.

In terms of assembly, tetramer of two catalytic chains and two glycosylated inactive chains. In terms of processing, whether or not any Cys residues participate in intrachain bonds is unknown, but they do not form interchain disulfide bonds with the 50 kDa catalytic subunit.

It localises to the secreted. In terms of biological role, the 83 kDa subunit binds and stabilizes the catalytic subunit at 37 degrees Celsius and keeps it in circulation. Under some circumstances it may be an allosteric modifier of the catalytic subunit. This Homo sapiens (Human) protein is Carboxypeptidase N subunit 2 (CPN2).